Consider the following 217-residue polypeptide: Large ribosomal subunit protein uL1 (217 aa).

The residue at position 122 (Lys-122) is an N6,N6-dimethyllysine; alternate. At Lys-122 the chain carries N6-methyllysine; alternate.

It belongs to the universal ribosomal protein uL1 family.

The polypeptide is Large ribosomal subunit protein uL1 (rpl10a) (Dictyostelium discoideum (Social amoeba)).